The chain runs to 225 residues: uncharacterized protein (225 aa).

Residues 1–19 (MKFNSISPNKQHHTGFTTS) are compositionally biased toward polar residues. The tract at residues 1–21 (MKFNSISPNKQHHTGFTTSNN) is disordered.

This is an uncharacterized protein from Dictyostelium discoideum (Social amoeba).